The sequence spans 286 residues: MERILQNFSDYLMHVRRLSDHTVVAYVGDVKQFLCFLIENDIELKDVSRLHIEEYIKKLSKQKTKLNSTSLARKISSLRSFFNYLQLTSIKDENPVEGIRNPKIRRRIPDFLLPSEIQKLLEFSMKNQRDYLMLSLLYFCGLRVSELCNLRVEDLSFSPAFVKITMGKGKKDRIVPLTSKLAEKLENYITSCGKSPEDYLFGSQIKIHPSTVFRIVRKYTMMCGIKKRIHPHTLRHTFATHLLQKGVNIRVVQDLLGHSNLSTTSVYLHVVDQEKFDAINKLLQEG.

Residues 1-86 form the Core-binding (CB) domain; the sequence is MERILQNFSD…SLRSFFNYLQ (86 aa). Residues 107–280 enclose the Tyr recombinase domain; the sequence is RIPDFLLPSE…VDQEKFDAIN (174 aa). Active-site residues include arginine 143, lysine 168, histidine 232, arginine 235, and histidine 258. Tyrosine 267 functions as the O-(3'-phospho-DNA)-tyrosine intermediate in the catalytic mechanism.

This sequence belongs to the 'phage' integrase family.

The protein resides in the cytoplasm. Its function is as follows. Site-specific tyrosine recombinase, which acts by catalyzing the cutting and rejoining of the recombining DNA molecules. The protein is Tyrosine recombinase Tlet_1492 of Pseudothermotoga lettingae (strain ATCC BAA-301 / DSM 14385 / NBRC 107922 / TMO) (Thermotoga lettingae).